The chain runs to 251 residues: Lactose phosphotransferase system repressor (251 aa).

The HTH deoR-type domain maps to 3–58 (KHERLDEIAKLVNKKGTIRTNEIVEGLNVSDMTVRRDLIELENKGILTKIHGGARS). The segment at residues 20–39 (IRTNEIVEGLNVSDMTVRRD) is a DNA-binding region (H-T-H motif).

Its function is as follows. Repressor of the lactose catabolism operon. Galactose-6-phosphate is the inducer. The polypeptide is Lactose phosphotransferase system repressor (lacR) (Staphylococcus aureus (strain N315)).